A 564-amino-acid chain; its full sequence is Probable cysteine--tRNA ligase, mitochondrial (564 aa).

A Zn(2+)-binding site is contributed by Cys-78. L-cysteine is bound at residue Gly-79. A 'HIGH' region motif is present at residues 80 to 90 (PTVYDHAHLGH). An L-cysteine-binding site is contributed by Thr-119. The 'KIIK' region signature appears at 124 to 127 (KIIK). Positions 257, 282, and 286 each coordinate Zn(2+). His-282 is an L-cysteine binding site. Positions 317–321 (KMSKS) match the 'KMSKS' region motif. Position 320 (Lys-320) interacts with ATP.

This sequence belongs to the class-I aminoacyl-tRNA synthetase family. Requires Zn(2+) as cofactor.

Its subcellular location is the mitochondrion. The catalysed reaction is tRNA(Cys) + L-cysteine + ATP = L-cysteinyl-tRNA(Cys) + AMP + diphosphate. It carries out the reaction 2 L-cysteine = S-sulfanyl-L-cysteine + L-alanine. It catalyses the reaction S-sulfanyl-L-cysteine + L-cysteine = S-disulfanyl-L-cysteine + L-alanine. The enzyme catalyses S-sulfanyl-L-cysteine + tRNA(Cys) + ATP = (S)-sulfanyl-L-cysteinyl-tRNA(Cys) + AMP + diphosphate. The catalysed reaction is S-disulfanyl-L-cysteine + tRNA(Cys) + ATP = (S)-disulfanyl-L-cysteinyl-tRNA(Cys) + AMP + diphosphate. In terms of biological role, mitochondrial cysteine-specific aminoacyl-tRNA synthetase that catalyzes the ATP-dependent ligation of cysteine to tRNA(Cys). Functionally, in addition to its role as an aminoacyl-tRNA synthetase, has also cysteine persulfide synthase activity. Produces reactive persulfide species such as cysteine persulfide (CysSSH) from substrate cysteine and mediate direct incorporation of CysSSH into proteins during translations, resulting in protein persulfides and polysulfides. CysSSHs behave as potent antioxidants and cellular protectants. This chain is Probable cysteine--tRNA ligase, mitochondrial, found in Homo sapiens (Human).